The sequence spans 500 residues: Cytochrome P450 726A27 (500 aa).

The helical; Signal-anchor for type II membrane protein transmembrane segment at 7 to 27 threads the bilayer; that stretch reads IPSYPIIFSFFIFIFMLIKIW. Cys-440 provides a ligand contact to heme.

It belongs to the cytochrome P450 family. Heme is required as a cofactor. As to expression, expressed in mature seeds.

It localises to the membrane. The enzyme catalyses (-)-casbene + reduced [NADPH--hemoprotein reductase] + O2 = 4-hydroxycasbene + oxidized [NADPH--hemoprotein reductase] + H2O + H(+). It catalyses the reaction 8-hydroxycasbene + reduced [NADPH--hemoprotein reductase] + O2 = 4,8-dihydroxycasbene + oxidized [NADPH--hemoprotein reductase] + H2O + H(+). It carries out the reaction 4,8-dihydroxycasbene + reduced [NADPH--hemoprotein reductase] + O2 = 4,5,8-trihydroxycasbene + oxidized [NADPH--hemoprotein reductase] + H2O + H(+). It functions in the pathway secondary metabolite biosynthesis; terpenoid biosynthesis. Functionally, involved in the biosynthesis of macrocyclic lathyrane type diterpenoids (also called Euphorbia factors) natural products, including the cyclization route from casbene to jolkinol C, a precursor for ingenol mebutate that is used to treat actinic keratosis, a precancerous skin condition. Catalyzes the hydroxylation of (-)-casbene and 8-hydroxycasbene to produce 4-hydroxycasbene and 4,8-dihydroxycasbene, respectively. This Euphorbia lathyris (Caper spurge) protein is Cytochrome P450 726A27.